Consider the following 634-residue polypeptide: Endoribonuclease rege-1 (634 aa).

Disordered regions lie at residues 1-33 (MDSTARGHAPLCRTSNQRGLGTRLNPYYQSTPH), 90-113 (SHPSLSRESSDPSKIDDDQTAPMI), and 156-223 (KMGL…NPDP). A compositionally biased stretch (basic and acidic residues) spans 97–106 (ESSDPSKIDD). Composition is skewed to low complexity over residues 182-194 (SSASSSSASSSSS) and 201-217 (SVSIATSSPATSSSTPS). In terms of domain architecture, RNase NYN spans 225-377 (LRAVVVDGSN…PSGRHGPRIE (153 aa)). Residue Asp-314 coordinates Mg(2+). The C3H1-type zinc finger occupies 387–412 (SSNPLVCPYARKCTYGNKCKFYHPER).

This sequence belongs to the ZC3H12 family. It depends on Mg(2+) as a cofactor. Expressed in the intestinal cells adjacent to the pharynx.

The protein resides in the cytoplasm. Its function is as follows. Endonuclease which binds to the 3'UTR of target mRNAs and induces degradation of the transcript. Acts together with rle-1 to repress the expression of the transcription factor ets-4 by binding to the conserved ADE (alternate decay element) and RCE (REGE-1 cleavage element) stem loop structure in its 3'UTR, which controls the expression of genes in the IIS and TORC1 pathways, including those involved in lipid metabolism and autophagosome formation. May play a role in the clearance of apoptotic cell corpses. In Caenorhabditis elegans, this protein is Endoribonuclease rege-1.